We begin with the raw amino-acid sequence, 90 residues long: YcgL domain-containing protein plu2139 (90 aa).

Residues 1–85 (MICAIYSSPK…PVENLMNAHL (85 aa)) enclose the YcgL domain.

In Photorhabdus laumondii subsp. laumondii (strain DSM 15139 / CIP 105565 / TT01) (Photorhabdus luminescens subsp. laumondii), this protein is YcgL domain-containing protein plu2139.